Consider the following 119-residue polypeptide: Large ribosomal subunit protein bL20 (119 aa).

This sequence belongs to the bacterial ribosomal protein bL20 family.

Its function is as follows. Binds directly to 23S ribosomal RNA and is necessary for the in vitro assembly process of the 50S ribosomal subunit. It is not involved in the protein synthesizing functions of that subunit. In Xylella fastidiosa (strain 9a5c), this protein is Large ribosomal subunit protein bL20.